A 343-amino-acid chain; its full sequence is Type II restriction enzyme BsuMI component YdiS (343 aa).

As to quaternary structure, bsuMI restriction activity requires YdiR, YdiS and YdjA.

The catalysed reaction is Endonucleolytic cleavage of DNA to give specific double-stranded fragments with terminal 5'-phosphates.. Its function is as follows. A P subtype restriction enzyme that recognizes the double-stranded sequence 5'-CTCGAG-3'; the cleavage site is unknown. This Bacillus subtilis (strain 168) protein is Type II restriction enzyme BsuMI component YdiS (ydiS).